The following is a 124-amino-acid chain: Ribonuclease pancreatic (124 aa).

Residues 1–13 (KESAAAKFERQHM) show a composition bias toward basic and acidic residues. Positions 1 to 25 (KESAAAKFERQHMDPSPSSASSSNY) are disordered. Residues Lys7 and Arg10 each contribute to the substrate site. His12 serves as the catalytic Proton acceptor. 4 disulfide bridges follow: Cys26–Cys84, Cys40–Cys95, Cys58–Cys110, and Cys65–Cys72. A glycan (N-linked (GlcNAc...) asparagine; partial) is linked at Asn34. Substrate contacts are provided by residues 41–45 (KPVNT), Lys66, and Arg85. His119 functions as the Proton donor in the catalytic mechanism.

This sequence belongs to the pancreatic ribonuclease family. Monomer. Interacts with and forms tight 1:1 complexes with RNH1. Dimerization of two such complexes may occur. Interaction with RNH1 inhibits this protein. As to expression, pancreas.

The protein resides in the secreted. It catalyses the reaction an [RNA] containing cytidine + H2O = an [RNA]-3'-cytidine-3'-phosphate + a 5'-hydroxy-ribonucleotide-3'-[RNA].. The catalysed reaction is an [RNA] containing uridine + H2O = an [RNA]-3'-uridine-3'-phosphate + a 5'-hydroxy-ribonucleotide-3'-[RNA].. Functionally, endonuclease that catalyzes the cleavage of RNA on the 3' side of pyrimidine nucleotides. Acts on single-stranded and double-stranded RNA. This chain is Ribonuclease pancreatic (RNASE1), found in Capreolus capreolus (European roe deer).